The primary structure comprises 469 residues: Interstitial collagenase (469 aa).

An N-terminal signal peptide occupies residues 1 to 18 (MPRLPLLLLLLWGTGSHG). A propeptide spans 19 to 99 (FPAATSETQE…PRCGVPDVAP (81 aa)) (activation peptide). The Cysteine switch signature appears at 90-97 (PRCGVPDV). Cys92 is a Zn(2+) binding site. The N-linked (GlcNAc...) asparagine glycan is linked to Asn120. The Ca(2+) site is built by Asp124 and Asp158. Positions 168 and 170 each coordinate Zn(2+). Positions 175, 176, 178, and 180 each coordinate Ca(2+). His183 provides a ligand contact to Zn(2+). Gly190, Gly192, and Asp194 together coordinate Ca(2+). His196 contacts Zn(2+). Residues Asp198, Asp199, and Glu201 each coordinate Ca(2+). A Zn(2+)-binding site is contributed by His218. Residue Glu219 is part of the active site. The Zn(2+) site is built by His222 and His228. A Phosphothreonine modification is found at Thr274. Hemopexin repeat units lie at residues 275-324 (PEVC…WPQL), 325-371 (PNGL…FGFP), 374-422 (VKSI…FPGI), and 423-466 (GNKV…WFNC). A disulfide bridge connects residues Cys278 and Cys466. Positions 285 and 329 each coordinate Ca(2+). At Tyr360 the chain carries Phosphotyrosine; by PKDCC. Residues Asp378 and Asp427 each contribute to the Ca(2+) site.

Belongs to the peptidase M10A family. Ca(2+) serves as cofactor. The cofactor is Zn(2+). Post-translationally, tyrosine phosphorylated in platelets by PKDCC/VLK.

The protein localises to the secreted. It is found in the extracellular space. It localises to the extracellular matrix. The enzyme catalyses Cleavage of the triple helix of collagen at about three-quarters of the length of the molecule from the N-terminus, at 775-Gly-|-Ile-776 in the alpha1(I) chain. Cleaves synthetic substrates and alpha-macroglobulins at bonds where P1' is a hydrophobic residue.. With respect to regulation, can be activated without removal of the activation peptide. Functionally, cleaves collagens of types I, II, and III at one site in the helical domain. Also cleaves collagens of types VII and X. This chain is Interstitial collagenase (MMP1), found in Bos taurus (Bovine).